Here is a 422-residue protein sequence, read N- to C-terminus: Tyrosine--tRNA ligase (422 aa).

Position 34 (tyrosine 34) interacts with L-tyrosine. The short motif at 39–48 (PTEDSLHVGH) is the 'HIGH' region element. Tyrosine 172 and glutamine 176 together coordinate L-tyrosine. Positions 232–236 (KFGKT) match the 'KMSKS' region motif. Residue lysine 235 participates in ATP binding. In terms of domain architecture, S4 RNA-binding spans 354–412 (KDLQEALVLSSLAQSRTQAKNMIISNSISINTKKIVNKNYIIDDNDKLFNQFTLLSRGK).

Belongs to the class-I aminoacyl-tRNA synthetase family. TyrS type 1 subfamily. In terms of assembly, homodimer.

The protein resides in the cytoplasm. The catalysed reaction is tRNA(Tyr) + L-tyrosine + ATP = L-tyrosyl-tRNA(Tyr) + AMP + diphosphate + H(+). In terms of biological role, catalyzes the attachment of tyrosine to tRNA(Tyr) in a two-step reaction: tyrosine is first activated by ATP to form Tyr-AMP and then transferred to the acceptor end of tRNA(Tyr). The polypeptide is Tyrosine--tRNA ligase (Buchnera aphidicola subsp. Schizaphis graminum (strain Sg)).